The sequence spans 136 residues: uncharacterized protein (136 aa).

The disordered stretch occupies residues 74–97; sequence RADPGRKGRTQPLPTQGSARRFLH.

This is an uncharacterized protein from Saccharomyces cerevisiae (strain ATCC 204508 / S288c) (Baker's yeast).